The following is a 193-amino-acid chain: Lipid A acyltransferase PagP (193 aa).

Positions 1 to 32 (MNGMAVVMIIRKYFLIIALLVMPWLAIPSVSA) are cleaved as a signal peptide. Active-site residues include histidine 65, aspartate 108, and serine 109.

It belongs to the lipid A palmitoyltransferase family. In terms of assembly, homodimer.

It is found in the cell outer membrane. The catalysed reaction is a lipid A + a 1,2-diacyl-sn-glycero-3-phosphocholine = a hepta-acyl lipid A + a 2-acyl-sn-glycero-3-phosphocholine. The enzyme catalyses a lipid IVA + a 1,2-diacyl-sn-glycero-3-phosphocholine = a lipid IVB + a 2-acyl-sn-glycero-3-phosphocholine. It catalyses the reaction a lipid IIA + a 1,2-diacyl-sn-glycero-3-phosphocholine = a lipid IIB + a 2-acyl-sn-glycero-3-phosphocholine. Transfers a fatty acid residue from the sn-1 position of a phospholipid to the N-linked hydroxyfatty acid chain on the proximal unit of lipid A or its precursors. This Salmonella paratyphi C (strain RKS4594) protein is Lipid A acyltransferase PagP.